A 132-amino-acid polypeptide reads, in one-letter code: Aspartate 1-decarboxylase (132 aa).

The Schiff-base intermediate with substrate; via pyruvic acid role is filled by S25. S25 is subject to Pyruvic acid (Ser). T57 is a substrate binding site. The active-site Proton donor is the Y58. Residue 73 to 75 participates in substrate binding; it reads GAA.

Belongs to the PanD family. In terms of assembly, heterooctamer of four alpha and four beta subunits. Requires pyruvate as cofactor. In terms of processing, is synthesized initially as an inactive proenzyme, which is activated by self-cleavage at a specific serine bond to produce a beta-subunit with a hydroxyl group at its C-terminus and an alpha-subunit with a pyruvoyl group at its N-terminus.

It localises to the cytoplasm. It catalyses the reaction L-aspartate + H(+) = beta-alanine + CO2. It functions in the pathway cofactor biosynthesis; (R)-pantothenate biosynthesis; beta-alanine from L-aspartate: step 1/1. Functionally, catalyzes the pyruvoyl-dependent decarboxylation of aspartate to produce beta-alanine. This Heliobacterium modesticaldum (strain ATCC 51547 / Ice1) protein is Aspartate 1-decarboxylase.